We begin with the raw amino-acid sequence, 138 residues long: MLQPKRRKYRKEQKGRNTGKATRGNAVSFGEFGLKAMGRGRLTARQIESARRAMTRHIKRGGRIWIRIFPDKPISKKPAEVRMGNGKGNPEYYVAEIQPGKMLYEMDGVSEDLAREAFRLAAAKLPIATNFVVRQVGT.

Basic residues predominate over residues 1 to 13 (MLQPKRRKYRKEQ). The interval 1 to 24 (MLQPKRRKYRKEQKGRNTGKATRG) is disordered.

This sequence belongs to the universal ribosomal protein uL16 family. Part of the 50S ribosomal subunit.

In terms of biological role, binds 23S rRNA and is also seen to make contacts with the A and possibly P site tRNAs. The polypeptide is Large ribosomal subunit protein uL16 (Cupriavidus necator (strain ATCC 17699 / DSM 428 / KCTC 22496 / NCIMB 10442 / H16 / Stanier 337) (Ralstonia eutropha)).